Reading from the N-terminus, the 1046-residue chain is Arrestin-related trafficking adapter 3 (1046 aa).

The interval 115-141 (YPPTEQKSKKKMDASAPNESNNAANNF) is disordered. A compositionally biased stretch (low complexity) spans 128–140 (ASAPNESNNAANN). A phosphoserine mark is found at S155 and S162. Composition is skewed to low complexity over residues 168–179 (SGLSSLNLSPLG) and 198–210 (RSSS…GPSR). The segment at 168-230 (SGLSSLNLSP…ATSPSVSHHN (63 aa)) is disordered. Phosphoserine is present on residues S213 and S586. The segment covering 605-614 (TRNSRQFNRN) has biased composition (polar residues). 2 disordered regions span residues 605–627 (TRNS…IFNS) and 651–820 (PLSP…FAHS). A compositionally biased stretch (low complexity) spans 669-694 (FDFSSDFISDAASGTTTTEVSSSESS). The segment covering 734–785 (KNSDKNSSETLNKKESMSKIEENKHKRETTPKKRENRDVKSLSTPQREESKD) has biased composition (basic and acidic residues). Positions 802-811 (LSLSSSLHSS) are enriched in low complexity. A phosphoserine mark is found at S826 and S838. The segment at 868–889 (NHDKNELNRHSTNTSSTPASAR) is disordered. Over residues 877–889 (HSTNTSSTPASAR) the composition is skewed to polar residues. Position 900 is a phosphoserine (S900). The segment at 986–1017 (QNSAESDHNNDIFTQGSGLTESSKNSDSEERF) is disordered. A compositionally biased stretch (polar residues) spans 996–1008 (DIFTQGSGLTESS). Phosphoserine is present on residues S1022 and S1023.

Belongs to the ALY1 family. As to quaternary structure, interacts with PCL6, PCL7 and RSP5. In terms of processing, ubiquitinated by RSP5. Phosphorylated by the cyclin-CDKs PCL6-PHO85 and PCL7-PHO85.

It is found in the cytoplasm. May regulate endocytosis by recruiting RSP5 ubiquitin ligase activity to specific plasma membrane proteins in response to extracellular stimuli. In Saccharomyces cerevisiae (strain ATCC 204508 / S288c) (Baker's yeast), this protein is Arrestin-related trafficking adapter 3 (ALY2).